The sequence spans 1220 residues: Cullin-associated NEDD8-dissociated protein 1 (1220 aa).

12 HEAT repeats span residues 1 to 35, 42 to 79, 121 to 157, 259 to 295, 365 to 410, 615 to 650, 680 to 700, 701 to 737, 738 to 775, 810 to 847, 850 to 887, and 1020 to 1057; these read MEEG…DANH, ESFP…KIPQ, FYTS…SLEI, ADYT…YQQV, LSRL…HVPR, IFLR…SVTD, TTAY…YLAE, SLLE…SILL, KSKN…VISK, FQSK…DYGK, LPAN…QSEK, and EVSQ…KSSV.

Belongs to the CAND family.

Its subcellular location is the nucleus. Functionally, key assembly factor of SCF (SKP1-CUL1-F-box protein) E3 ubiquitin ligase complexes that promotes the exchange of the substrate-recognition F-box subunit in SCF complexes, thereby playing a key role in the cellular repertoire of SCF complexes. Acts as a F-box protein exchange factor. This chain is Cullin-associated NEDD8-dissociated protein 1 (knd1), found in Schizosaccharomyces pombe (strain 972 / ATCC 24843) (Fission yeast).